Reading from the N-terminus, the 369-residue chain is Chorismate synthase (369 aa).

Positions 48 and 54 each coordinate NADP(+). FMN is bound by residues 125–127 (RSS), 238–239 (NA), glycine 278, 293–297 (KPTSS), and arginine 319.

This sequence belongs to the chorismate synthase family. In terms of assembly, homotetramer. FMNH2 serves as cofactor.

It carries out the reaction 5-O-(1-carboxyvinyl)-3-phosphoshikimate = chorismate + phosphate. It functions in the pathway metabolic intermediate biosynthesis; chorismate biosynthesis; chorismate from D-erythrose 4-phosphate and phosphoenolpyruvate: step 7/7. In terms of biological role, catalyzes the anti-1,4-elimination of the C-3 phosphate and the C-6 proR hydrogen from 5-enolpyruvylshikimate-3-phosphate (EPSP) to yield chorismate, which is the branch point compound that serves as the starting substrate for the three terminal pathways of aromatic amino acid biosynthesis. This reaction introduces a second double bond into the aromatic ring system. In Burkholderia mallei (strain NCTC 10229), this protein is Chorismate synthase.